We begin with the raw amino-acid sequence, 138 residues long: uncharacterized protein (138 aa).

Positions 1–37 (MNSTFTSQPLLNRSEPRVFKEFYRLVIGCNPAWQVMA) are cleaved as a signal peptide.

It to H.influenzae HI_1631.

This is an uncharacterized protein from Sinorhizobium fredii (strain NBRC 101917 / NGR234).